Reading from the N-terminus, the 555-residue chain is CTP synthase (555 aa).

The tract at residues 1–265 (MTRYIFITGG…GNRVCEKLNI (265 aa)) is amidoligase domain. Ser-13 serves as a coordination point for CTP. Ser-13 is a UTP binding site. ATP-binding positions include 14–19 (SLGKGI) and Asp-71. Asp-71 and Glu-139 together coordinate Mg(2+). CTP contacts are provided by residues 146 to 148 (DIE), 186 to 191 (KTKPTQ), and Lys-222. Residues 186 to 191 (KTKPTQ) and Lys-222 each bind UTP. The Glutamine amidotransferase type-1 domain occupies 290–541 (TVAVVGKYVD…IKAGLAAKEA (252 aa)). Gly-351 contacts L-glutamine. The active-site Nucleophile; for glutamine hydrolysis is the Cys-378. L-glutamine contacts are provided by residues 379–382 (LGMQ), Glu-402, and Arg-469. Active-site residues include His-514 and Glu-516.

Belongs to the CTP synthase family. In terms of assembly, homotetramer.

It catalyses the reaction UTP + L-glutamine + ATP + H2O = CTP + L-glutamate + ADP + phosphate + 2 H(+). It carries out the reaction L-glutamine + H2O = L-glutamate + NH4(+). The enzyme catalyses UTP + NH4(+) + ATP = CTP + ADP + phosphate + 2 H(+). The protein operates within pyrimidine metabolism; CTP biosynthesis via de novo pathway; CTP from UDP: step 2/2. Allosterically activated by GTP, when glutamine is the substrate; GTP has no effect on the reaction when ammonia is the substrate. The allosteric effector GTP functions by stabilizing the protein conformation that binds the tetrahedral intermediate(s) formed during glutamine hydrolysis. Inhibited by the product CTP, via allosteric rather than competitive inhibition. Its function is as follows. Catalyzes the ATP-dependent amination of UTP to CTP with either L-glutamine or ammonia as the source of nitrogen. Regulates intracellular CTP levels through interactions with the four ribonucleotide triphosphates. This Coxiella burnetii (strain CbuK_Q154) (Coxiella burnetii (strain Q154)) protein is CTP synthase.